A 377-amino-acid chain; its full sequence is Homoserine O-succinyltransferase (377 aa).

In terms of domain architecture, AB hydrolase-1 spans 50 to 358 (NAVLICHALS…PSSYGHDSFL (309 aa)). The Nucleophile role is filled by Ser-156. Substrate is bound at residue Arg-226. Residues Asp-321 and His-354 contribute to the active site. Substrate is bound at residue Asp-355.

The protein belongs to the AB hydrolase superfamily. MetX family. Homodimer.

It localises to the cytoplasm. It carries out the reaction L-homoserine + succinyl-CoA = O-succinyl-L-homoserine + CoA. The protein operates within amino-acid biosynthesis; L-methionine biosynthesis via de novo pathway; O-succinyl-L-homoserine from L-homoserine: step 1/1. Functionally, transfers a succinyl group from succinyl-CoA to L-homoserine, forming succinyl-L-homoserine. This chain is Homoserine O-succinyltransferase, found in Nitrosomonas europaea (strain ATCC 19718 / CIP 103999 / KCTC 2705 / NBRC 14298).